We begin with the raw amino-acid sequence, 424 residues long: Magnesium-chelatase subunit ChlI-1, chloroplastic (424 aa).

The transit peptide at 1-60 directs the protein to the chloroplast; it reads MASLLGTSSSAIWASPSLSSPSSKPSSSPICFRPGKLFGSKLNAGIQIRPKKNRSRYHVS. Val-61 carries the N-acetylvaline modification. 2 disulfide bridges follow: Cys-102–Cys-193 and Cys-354–Cys-396. 119–126 provides a ligand contact to ATP; the sequence is GDRGTGKS. Position 355 is a phosphoserine (Ser-355).

It belongs to the Mg-chelatase subunits D/I family. As to quaternary structure, the magnesium chelatase complex is a heterotrimer consisting of subunits CHLI, CHLD and CHLH. Interacts with CHLH and CHLD.

It localises to the plastid. Its subcellular location is the chloroplast. It catalyses the reaction protoporphyrin IX + Mg(2+) + ATP + H2O = Mg-protoporphyrin IX + ADP + phosphate + 3 H(+). The protein operates within porphyrin-containing compound metabolism; chlorophyll biosynthesis. Redox regulation; active in reducing conditions, inactive in oxidizing conditions. Thioredoxins f and m mediate the reversible reductive activation of oxidized CHLI1. Functionally, involved in chlorophyll biosynthesis. Catalyzes the insertion of magnesium ion into protoporphyrin IX to yield Mg-protoporphyrin IX. The magnesium-chelatase is a complex of three subunits, CHLI, CHLD and CHLH. The reaction takes place in two steps, with an ATP-dependent activation followed by an ATP-dependent chelation step. Possesses high affinity for ATP and may play a major role in chlorophyll biosynthesis. Does not bind abscisic acid (ABA), but is a positive regulator of ABA signaling. May be involved in ABA signaling in the control of stomatal aperture, but does not seem to have an effect on ABA-induced gene expression. This Arabidopsis thaliana (Mouse-ear cress) protein is Magnesium-chelatase subunit ChlI-1, chloroplastic (CHLI1).